The chain runs to 1025 residues: MNPMRDQPGSPYGDSTPRSPFSPFSPLSVDDRHRNHADTKTPRSPFSPFSPLSGDERHKSLAESKFQQALASSGQLDPLSPGSMHHGGHKFHEVFQMKQGRYDLQASKISEMMKSSSLDNAPTQSLLSVLNGILDESIERKNGEIPQRVACLLRKVVQEIERRISTQAEHLRTQNNIFKTREEKYQSRINVLEALASGTGVEHEIATQQLRQIETEKSMWEEKKKHEEEDMVKLMKQNDQHNLEISALKQELETTKRKYEQQYSQIESQTKTEKSKWEEQKKNEEEDMDKLLKENDQFNLQISALRQELETTRKAYEQQCSQMESQTMVATTGLESRLKELEQEGKVVNTAKNALEERVKELEQMGKEAHSAKNALEEKIKQLQQMEKETKTANTSLEGKIQELEQNLVMWKTKVREMEKKSESNHQRWSQKELSYKSFIDNQSQALLELRSYSRSIKQEILKVQENYTDQFSQLGKKLIELSNAAENYHAVLTENRKLFNELQELKGNIRVFCRVRPFLPAQGAANTVVEYVGEDGELVVTNPTRPGKDGLRQFKFNKVYSPTASQADVFSDIRPLVRSVLDGYNVCIFAYGQTGSGKTYTMTGPDGSSEEDWGVNYRALNDLFKISQSRKGNISYEVGVQMVEIYNEQVLDLLSDDNSQKKTLGILSTTQQNGLAVPDASMYPVTSTSDVITLMDIGLQNRAVGSTALNERSSRSHSIVTVHVRGKDLKTGSVLYGNLHLVDLAGSERVDRSEVTGDRLREAQHINKSLSSLGDVIFSLASKSSHVPYRNSKLTQLLQTSLGGRAKTLMFVQLNPDATSYSESMSTLKFAERVSGVELGAAKTSKEGKDVRDLMEQLASLKDTIARKDEEIERLQHQPQRLQKSMMRRKSIGHTDDINSDTGEYSSQSRYSVTDGESLASSAEAEYDERLSEITSDAASMGTQGSIDVTKRPPRISDRAKSVTAKSSTSVTRPLDKLRKVATRTTSTVAKVTGLTSSSKGLASSSIKKTGSTSSLAKSSKRWA.

2 disordered regions span residues 1–87 and 263–286; these read MNPM…MHHG and YSQI…NEEE. The segment covering 15 to 28 has biased composition (low complexity); sequence STPRSPFSPFSPLS. Positions 29–41 are enriched in basic and acidic residues; that stretch reads VDDRHRNHADTKT. Residues 42–53 are compositionally biased toward low complexity; it reads PRSPFSPFSPLS. A compositionally biased stretch (polar residues) spans 65–75; that stretch reads KFQQALASSGQ. The stretch at 203 to 425 forms a coiled coil; it reads HEIATQQLRQ…REMEKKSESN (223 aa). The span at 270–286 shows a compositional bias: basic and acidic residues; that stretch reads TKTEKSKWEEQKKNEEE. In terms of domain architecture, Kinesin motor spans 509–838; the sequence is NIRVFCRVRP…LKFAERVSGV (330 aa). 593-600 provides a ligand contact to ATP; the sequence is GQTGSGKT. A coiled-coil region spans residues 847–879; it reads KEGKDVRDLMEQLASLKDTIARKDEEIERLQHQ. Disordered regions lie at residues 881-926, 939-977, and 994-1025; these read QRLQ…SAEA, AASM…RPLD, and TGLT…KRWA. Polar residues-rich tracts occupy residues 901-913 and 939-948; these read SDTG…SRYS and AASMGTQGSI. Basic and acidic residues predominate over residues 950–962; the sequence is VTKRPPRISDRAK. Low complexity-rich tracts occupy residues 963–974 and 998–1016; these read SVTAKSSTSVTR and SSSK…STSS.

The protein belongs to the TRAFAC class myosin-kinesin ATPase superfamily. Kinesin family. KIN-14 subfamily.

This is Kinesin-like protein KIN-14P from Arabidopsis thaliana (Mouse-ear cress).